The sequence spans 445 residues: Argininosuccinate synthase (445 aa).

ATP-binding positions include 17–25 (AFSGGLDTS) and Ala-43. Position 99 (Tyr-99) interacts with L-citrulline. ATP contacts are provided by Gly-129 and Thr-131. The L-aspartate site is built by Thr-131, Asn-135, and Asp-136. Residue Asn-135 coordinates L-citrulline. Asp-136 provides a ligand contact to ATP. Residues Arg-139 and Ser-192 each contribute to the L-citrulline site. Asp-194 lines the ATP pocket. L-citrulline contacts are provided by Thr-201, Glu-203, and Glu-280.

This sequence belongs to the argininosuccinate synthase family. Type 2 subfamily. As to quaternary structure, homotetramer.

The protein localises to the cytoplasm. It carries out the reaction L-citrulline + L-aspartate + ATP = 2-(N(omega)-L-arginino)succinate + AMP + diphosphate + H(+). Its pathway is amino-acid biosynthesis; L-arginine biosynthesis; L-arginine from L-ornithine and carbamoyl phosphate: step 2/3. This Rhodopseudomonas palustris (strain ATCC BAA-98 / CGA009) protein is Argininosuccinate synthase.